A 178-amino-acid polypeptide reads, in one-letter code: Large ribosomal subunit protein uL5 (178 aa).

It belongs to the universal ribosomal protein uL5 family. As to quaternary structure, part of the 50S ribosomal subunit; part of the 5S rRNA/L5/L18/L25 subcomplex. Contacts the 5S rRNA and the P site tRNA. Forms a bridge to the 30S subunit in the 70S ribosome.

This is one of the proteins that bind and probably mediate the attachment of the 5S RNA into the large ribosomal subunit, where it forms part of the central protuberance. In the 70S ribosome it contacts protein S13 of the 30S subunit (bridge B1b), connecting the 2 subunits; this bridge is implicated in subunit movement. Contacts the P site tRNA; the 5S rRNA and some of its associated proteins might help stabilize positioning of ribosome-bound tRNAs. The chain is Large ribosomal subunit protein uL5 from Psychrobacter sp. (strain PRwf-1).